Here is a 441-residue protein sequence, read N- to C-terminus: Ribulose bisphosphate carboxylase large chain (441 aa).

Substrate contacts are provided by asparagine 89 and threonine 139. Catalysis depends on lysine 141, which acts as the Proton acceptor. Lysine 143 is a substrate binding site. Residues lysine 167, aspartate 169, and glutamate 170 each coordinate Mg(2+). An N6-carboxylysine modification is found at lysine 167. The Proton acceptor role is filled by histidine 260. Substrate is bound by residues arginine 261, histidine 293, and serine 345.

It belongs to the RuBisCO large chain family. Type I subfamily. As to quaternary structure, heterohexadecamer of 8 large chains and 8 small chains; disulfide-linked. The disulfide link is formed within the large subunit homodimers. Requires Mg(2+) as cofactor. Post-translationally, the disulfide bond which can form in the large chain dimeric partners within the hexadecamer appears to be associated with oxidative stress and protein turnover.

The protein localises to the plastid. Its subcellular location is the chloroplast. The enzyme catalyses 2 (2R)-3-phosphoglycerate + 2 H(+) = D-ribulose 1,5-bisphosphate + CO2 + H2O. It catalyses the reaction D-ribulose 1,5-bisphosphate + O2 = 2-phosphoglycolate + (2R)-3-phosphoglycerate + 2 H(+). Its function is as follows. RuBisCO catalyzes two reactions: the carboxylation of D-ribulose 1,5-bisphosphate, the primary event in carbon dioxide fixation, as well as the oxidative fragmentation of the pentose substrate in the photorespiration process. Both reactions occur simultaneously and in competition at the same active site. The polypeptide is Ribulose bisphosphate carboxylase large chain (Symphoricarpos albus (Common snowberry)).